The sequence spans 231 residues: 2-C-methyl-D-erythritol 4-phosphate cytidylyltransferase (231 aa).

Belongs to the IspD/TarI cytidylyltransferase family. IspD subfamily. As to quaternary structure, homodimer.

It catalyses the reaction 2-C-methyl-D-erythritol 4-phosphate + CTP + H(+) = 4-CDP-2-C-methyl-D-erythritol + diphosphate. It functions in the pathway isoprenoid biosynthesis; isopentenyl diphosphate biosynthesis via DXP pathway; isopentenyl diphosphate from 1-deoxy-D-xylulose 5-phosphate: step 2/6. Functionally, catalyzes the formation of 4-diphosphocytidyl-2-C-methyl-D-erythritol from CTP and 2-C-methyl-D-erythritol 4-phosphate (MEP). This chain is 2-C-methyl-D-erythritol 4-phosphate cytidylyltransferase, found in Citrobacter koseri (strain ATCC BAA-895 / CDC 4225-83 / SGSC4696).